The sequence spans 66 residues: Protein translocase subunit SecE (66 aa).

A helical membrane pass occupies residues 29-49 (LVASTLVVVVAVFIFSLICLV).

It belongs to the SecE/SEC61-gamma family. As to quaternary structure, component of the Sec protein translocase complex. Heterotrimer consisting of SecY, SecE and SecG subunits. The heterotrimers can form oligomers, although 1 heterotrimer is thought to be able to translocate proteins. Interacts with the ribosome. Interacts with SecDF, and other proteins may be involved. Interacts with SecA.

It localises to the cell inner membrane. Its function is as follows. Essential subunit of the Sec protein translocation channel SecYEG. Clamps together the 2 halves of SecY. May contact the channel plug during translocation. This chain is Protein translocase subunit SecE, found in Rickettsia felis (strain ATCC VR-1525 / URRWXCal2) (Rickettsia azadi).